The following is a 440-amino-acid chain: Xylose isomerase (440 aa).

Active-site residues include histidine 101 and aspartate 104. 7 residues coordinate Mg(2+): glutamate 232, glutamate 268, histidine 271, aspartate 296, aspartate 307, aspartate 309, and aspartate 339.

This sequence belongs to the xylose isomerase family. In terms of assembly, homotetramer. The cofactor is Mg(2+).

The protein resides in the cytoplasm. It catalyses the reaction alpha-D-xylose = alpha-D-xylulofuranose. The polypeptide is Xylose isomerase (Salmonella agona (strain SL483)).